We begin with the raw amino-acid sequence, 149 residues long: Gamma-glutamylaminecyclotransferase (149 aa).

7-10 (YGTL) contributes to the substrate binding site. Glu-82 serves as the catalytic Proton acceptor.

This sequence belongs to the gamma-glutamylcyclotransferase family. As to quaternary structure, monomer.

It catalyses the reaction epsilon-(gamma-L-glutamyl)-L-lysine = 5-oxo-L-proline + L-lysine. Functionally, contributes to degradation of proteins cross-linked by transglutaminases by degrading the cross-link between a lysine and a glutamic acid residue. Catalyzes the formation of 5-oxo-L-proline from L-gamma-glutamyl-L-epsilon-lysine. Inactive with L-gamma-glutamyl-alpha-amino acid substrates such as L-gamma-glutamyl-L-alpha-cysteine and L-gamma-glutamyl-L-alpha-alanine. The protein is Gamma-glutamylaminecyclotransferase (Ggact) of Mus musculus (Mouse).